Reading from the N-terminus, the 181-residue chain is Oligoribonuclease (181 aa).

The 164-residue stretch at 8–171 (LIWIDLEMTG…DDIRESIAEL (164 aa)) folds into the Exonuclease domain. Tyrosine 129 is an active-site residue.

Belongs to the oligoribonuclease family.

Its subcellular location is the cytoplasm. Its function is as follows. 3'-to-5' exoribonuclease specific for small oligoribonucleotides. This Vibrio vulnificus (strain CMCP6) protein is Oligoribonuclease.